We begin with the raw amino-acid sequence, 76 residues long: Putative membrane protein insertion efficiency factor (76 aa).

The protein belongs to the UPF0161 family.

The protein localises to the cell inner membrane. Could be involved in insertion of integral membrane proteins into the membrane. The polypeptide is Putative membrane protein insertion efficiency factor (Anaeromyxobacter dehalogenans (strain 2CP-C)).